The primary structure comprises 290 residues: Acetyl-coenzyme A carboxylase carboxyl transferase subunit beta (290 aa).

In terms of domain architecture, CoA carboxyltransferase N-terminal spans 30–290 (IMTKCPKCKK…HAGQEVNKDA (261 aa)). Zn(2+)-binding residues include cysteine 34, cysteine 37, cysteine 53, and cysteine 56. The segment at 34-56 (CPKCKKIMYTKELSENLNVCFNC) adopts a C4-type zinc-finger fold.

This sequence belongs to the AccD/PCCB family. As to quaternary structure, acetyl-CoA carboxylase is a heterohexamer composed of biotin carboxyl carrier protein (AccB), biotin carboxylase (AccC) and two subunits each of ACCase subunit alpha (AccA) and ACCase subunit beta (AccD). The cofactor is Zn(2+).

It localises to the cytoplasm. The enzyme catalyses N(6)-carboxybiotinyl-L-lysyl-[protein] + acetyl-CoA = N(6)-biotinyl-L-lysyl-[protein] + malonyl-CoA. Its pathway is lipid metabolism; malonyl-CoA biosynthesis; malonyl-CoA from acetyl-CoA: step 1/1. In terms of biological role, component of the acetyl coenzyme A carboxylase (ACC) complex. Biotin carboxylase (BC) catalyzes the carboxylation of biotin on its carrier protein (BCCP) and then the CO(2) group is transferred by the transcarboxylase to acetyl-CoA to form malonyl-CoA. This Staphylococcus carnosus (strain TM300) protein is Acetyl-coenzyme A carboxylase carboxyl transferase subunit beta.